The primary structure comprises 83 residues: Mu-theraphotoxin-Hhn2l (83 aa).

The first 21 residues, 1 to 21 (MKASMFLALAGLVLLFVVGYA), serve as a signal peptide directing secretion. Residues 22-48 (SESEEKEFPIELLSKIFAVDVFKGEER) constitute a propeptide that is removed on maturation. 3 cysteine pairs are disulfide-bonded: C50–C65, C57–C70, and C64–C77. L81 is subject to Leucine amide.

This sequence belongs to the neurotoxin 10 (Hwtx-1) family. 15 (Hntx-3) subfamily. In terms of assembly, monomer. Expressed by the venom gland.

The protein resides in the secreted. Lethal neurotoxin. Selectively blocks tetrodotoxin-sensitive voltage-gated sodium channels (Nav). Does not affect tetrodotoxin-resistant voltage-gated sodium channels or calcium channels. The chain is Mu-theraphotoxin-Hhn2l from Cyriopagopus hainanus (Chinese bird spider).